The following is a 739-amino-acid chain: Eukaryotic translation initiation factor 3 subunit B (739 aa).

One can recognise an RRM domain in the interval 39-125 (AFVVIDGLPV…HTLAVNKLTD (87 aa)). 5 WD repeats span residues 191–229 (RDHW…KQKQ), 231–288 (PHPF…RSFV), 457–498 (SLKD…SFFA), 516–559 (IEKK…EKPE), and 574–612 (NEHF…HTFS).

The protein belongs to the eIF-3 subunit B family. Component of the eukaryotic translation initiation factor 3 (eIF-3) complex.

It is found in the cytoplasm. Functionally, RNA-binding component of the eukaryotic translation initiation factor 3 (eIF-3) complex, which is involved in protein synthesis of a specialized repertoire of mRNAs and, together with other initiation factors, stimulates binding of mRNA and methionyl-tRNAi to the 40S ribosome. The eIF-3 complex specifically targets and initiates translation of a subset of mRNAs involved in cell proliferation. This chain is Eukaryotic translation initiation factor 3 subunit B, found in Coccidioides immitis (strain RS) (Valley fever fungus).